Reading from the N-terminus, the 136-residue chain is Membrane-bound negative regulator YvrL (136 aa).

Helical transmembrane passes span 18 to 38 (LLAA…LFSL), 46 to 66 (AAHV…FEPF), 83 to 103 (LFIL…AHTT), and 106 to 126 (LISD…VFLI).

It is found in the cell membrane. Functionally, negatively regulates RNA polymerase sigma factor SigO-dependent transcription. Prevents the expression or secretion of OxdC under nonstress conditions. May act as an anti-sigma factor. This chain is Membrane-bound negative regulator YvrL (yvrL), found in Bacillus subtilis (strain 168).